We begin with the raw amino-acid sequence, 98 residues long: Integration host factor subunit alpha (98 aa).

The segment at 49 to 71 is disordered; it reads FGNFDLRDKNQRPGRNPKTGEDI.

This sequence belongs to the bacterial histone-like protein family. In terms of assembly, heterodimer of an alpha and a beta chain.

This protein is one of the two subunits of integration host factor, a specific DNA-binding protein that functions in genetic recombination as well as in transcriptional and translational control. The polypeptide is Integration host factor subunit alpha (Edwardsiella ictaluri (strain 93-146)).